Consider the following 366-residue polypeptide: Mitochondrial carrier protein MTM1 (366 aa).

3 Solcar repeats span residues 14 to 149 (ERML…IRDV), 156 to 250 (YPTL…CKER), and 266 to 359 (VHFI…SKKV). The next 6 membrane-spanning stretches (helical) occupy residues 17–36 (LSAGAGSVLTSLILTPMDVV), 126–146 (SLTLLMAIPANMVYFSGYEYI), 162–182 (LFCGAIARVFAATSIAPLELV), 229–249 (TLWRDVPFSAIYWSSYELCKE), 268–286 (FINSFASGCISGMIAAICT), and 331–352 (LYTGLAARVIKIRPSCAIMISS).

This sequence belongs to the mitochondrial carrier (TC 2.A.29) family.

It is found in the mitochondrion inner membrane. Involved in the mitochondrial activation of SOD2 by specifically facilitating insertion of the essential manganese cofactor. Has the ability to activate iron regulon in an iron-dependent manner. Responds to calorie restriction (CR) strength. The chain is Mitochondrial carrier protein MTM1 (MTM1) from Saccharomyces cerevisiae (strain ATCC 204508 / S288c) (Baker's yeast).